The sequence spans 677 residues: UvrABC system protein B (677 aa).

Residues 24–412 (EGVLEGVPAQ…EGIVVEQVIR (389 aa)) form the Helicase ATP-binding domain. 37-44 (GVTGSGKT) serves as a coordination point for ATP. A Beta-hairpin motif is present at residues 90 to 113 (YYDYYQPEAYLPSSDTYIEKDLAI). A Helicase C-terminal domain is found at 429–591 (QIDDLMEEIQ…ITPQQIKKAR (163 aa)). One can recognise a UVR domain in the interval 635 to 670 (EKSMERTRKLMQEAAKKLEFIEAAQYRDELLKMEDL).

It belongs to the UvrB family. As to quaternary structure, forms a heterotetramer with UvrA during the search for lesions. Interacts with UvrC in an incision complex.

The protein localises to the cytoplasm. Its function is as follows. The UvrABC repair system catalyzes the recognition and processing of DNA lesions. A damage recognition complex composed of 2 UvrA and 2 UvrB subunits scans DNA for abnormalities. Upon binding of the UvrA(2)B(2) complex to a putative damaged site, the DNA wraps around one UvrB monomer. DNA wrap is dependent on ATP binding by UvrB and probably causes local melting of the DNA helix, facilitating insertion of UvrB beta-hairpin between the DNA strands. Then UvrB probes one DNA strand for the presence of a lesion. If a lesion is found the UvrA subunits dissociate and the UvrB-DNA preincision complex is formed. This complex is subsequently bound by UvrC and the second UvrB is released. If no lesion is found, the DNA wraps around the other UvrB subunit that will check the other stand for damage. The protein is UvrABC system protein B of Bacteroides fragilis (strain ATCC 25285 / DSM 2151 / CCUG 4856 / JCM 11019 / LMG 10263 / NCTC 9343 / Onslow / VPI 2553 / EN-2).